We begin with the raw amino-acid sequence, 321 residues long: MYRGGRMWGMSHSLPSGMSSYAFSPQDTDFSSYPSTIGRQHSQQSQRYYQNNNCGLGSVGNMANSTNSLNSGTNNSGTNLIVNYLPQDMQDRELYSLFRTIGPINTCRIMRDYKTGYSYGYGFVDFGSEADALRAINNLNGITVRNKRIKVSFARPGGEQLRDTNLYVTNLSRSITDEQLETIFGKYGQIVQKNILRDKHTGTPRGVAFIRFNKREEAQEAISALNNVIPEGGTQPLTVRVAEEHGKSKGHVYMAPNQPPHGNMGHGNMGNMGHGNMGMAGGSGMNLNNMNAFNGMNQMVHRGRQKHSYQRKIHPYNPNFL.

RRM domains lie at 78–156 (TNLI…FARP) and 164–244 (TNLY…VAEE).

Expressed in gonads and somatic tissues of both sexes. In the ovary, expressed in the last egg chamber of each ovariole. Highly expressed in nurse cells with low expression found in oocytes. Highly expressed in testis with lower expression in testis sheath and vas deferentia.

The protein resides in the nucleus. In terms of biological role, unknown; apparently not involved in somatic sex determination. This is Sex-lethal homolog (SXL) from Megaselia scalaris (Humpbacked fly).